The following is a 375-amino-acid chain: Transcription factor E2F4 (375 aa).

A DNA-binding region spans residues 12-81 (SRHEKSLGLL…KNSIQWKGVG (70 aa)). A leucine-zipper region spans residues 39 to 61 (LKAAADTLAVRQKRRIYDITNVL). A DEF box motif is present at residues 44 to 81 (DTLAVRQKRRIYDITNVLEGIGLIEKKSKNSIQWKGVG). The tract at residues 82-177 (PGCNTREIAD…NTNGQKKFQI (96 aa)) is dimerization. Positions 197–300 (SSAPVVVPVP…PDPSTSFQPI (104 aa)) are disordered. Residues 220-270 (STPQRPALTPQNDIATSPAPTVPHSTISNAESQDCPTGQTFSMENTTSSRL) show a composition bias toward polar residues. Residues 280–296 (SSASLDNSNDSPDPSTS) are compositionally biased toward low complexity. A transactivation region spans residues 299 to 375 (PIKSDLSDVL…CDLFDVPINL (77 aa)).

Belongs to the E2F/DP family. As to quaternary structure, component of the drtf1/e2f transcription factor complex. Component of the EDM complex, at least composed of e2f4, e2f5, mcidas and tfdp1.

The protein resides in the nucleus. Transcription activator that binds DNA cooperatively with DP proteins through the E2 recognition site, 5'-TTTC[CG]CGC-3' found in the promoter region of a number of genes. Component of the EDM complex, a complex specifically required for multiciliate cell differentiation: the EDM complex binds and activate genes required for centriole biogenesis. Activates genes required for centriole assembly (plk4, cep152) and genes specifically required for motile cilia formation (foxj1). Also promotes the deuterosome pathway of centriole biogenesis by activating expression of deup1, but not its paralog cep63. The protein is Transcription factor E2F4 of Xenopus laevis (African clawed frog).